A 982-amino-acid polypeptide reads, in one-letter code: MAAPVLYGGAGGTATGPGDMRRSLMHEKKQVFAELRREAQALRVAKEARGKMSVWDPSTREGARGYREKVVRFGRQIASLLQYFENMHSPALDIIACDKFLLKYQIYGDIDRDPAFGENTMTAEVPVVWDKCEVEVKLYAGPLQKLMSRAKLVGAAREGIPNRNDVAKSTGWNQDQVQKFPDNRMDSLISLLEQMQTGQSKLTRLVKGFLILLEMAERKEVDFHVGNHIHVTYAIAPVCDSYDLPGRCYVFNSKPTSEAHAAVLLAMCREYPPPQFASHVSVPADAEDVCIVSQGRQIQPGSAVTLNPGLVYSSILTYAMDTSCTDLLQEAQIIACSLQENRYFSRIGLPTVVSLYDLMVPAFIAQNSALEGARLSGDLSKAVGRVHQMLGMVAAKDIISATHMQSRTGFDPSHGIRQYLNSNSRLVTQMASKLTGIGLFDATPQMRIFSEMDTADYADMLHLTIFEGLWLVQDASVCTDNGPISFLVNGEKLLSADRAGYDVLVEELTLANIRIEHHKMPTGAFTTRWVAAKRDSALRLTPRSRTAHRVDMVRECDFNPTMNLKAAGPKARLRGSGVKSRRRVSEVPLAHVFRSPPRRESTTTTDDSPRWLTREGPQLTRRVPIIDEPPAYESGRSSSPVTSSISEGTSQHEEEMGLFDAEELPMQQTVIATEARRRLGRGTLERIQEAALEGQVAQGEVTAEKNRRIEAMLSARDPQFTGREQITKMLSDGGLGVREREEWLELVDKTVGVKGLKEVRSIDGIRRHLEEYGEREGFAVVRTLLSGNSKHVRRINQLIRESNPSAFETEASRMRRLRADWDGDAGSAPVNALHFVGNSPGWKRWLENNNIPSDIQVAGKKRMCSYLAEVLSHGNLKLSDATKLGRLVEGTSLDLFPPQLSSEEFSTCSEATLAWRNAPSSLGVRPFAQEDSRWLVMAATCGGGSFGIGKLKSLCKEFSVPKELRDALRVKYGLFGGKDSLE.

Disordered regions lie at residues 592–613 and 628–655; these read VFRS…RWLT and EPPA…HEEE. The span at 597–613 shows a compositional bias: basic and acidic residues; the sequence is PRRESTTTTDDSPRWLT. Polar residues predominate over residues 635–649; sequence GRSSSPVTSSISEGT.

In terms of assembly, homomultimer.

It is found in the virion. In terms of biological role, capsid protein self-assembles to form an icosahedral capsid with a T=1 symmetry, about 35-40 nm in diameter. The sequence is that of Capsid protein (p2) from Penicillium chrysogenum virus (isolate Caston/2003) (PcV).